Consider the following 143-residue polypeptide: Peptide methionine sulfoxide reductase MsrB (143 aa).

One can recognise a MsrB domain in the interval 16-139; it reads DAELRRRLTP…NSAALNFESR (124 aa). Cys-55, Cys-58, Cys-104, and Cys-107 together coordinate Zn(2+). The Nucleophile role is filled by Cys-128.

It belongs to the MsrB Met sulfoxide reductase family. The cofactor is Zn(2+).

The enzyme catalyses L-methionyl-[protein] + [thioredoxin]-disulfide + H2O = L-methionyl-(R)-S-oxide-[protein] + [thioredoxin]-dithiol. The polypeptide is Peptide methionine sulfoxide reductase MsrB (Burkholderia lata (strain ATCC 17760 / DSM 23089 / LMG 22485 / NCIMB 9086 / R18194 / 383)).